The following is a 131-amino-acid chain: C-type natriuretic peptide (131 aa).

A signal peptide spans 1–20 (MMCKALVFAVLLLAVPLERA). A propeptide spanning residues 21–109 (DSRALRTPVD…KRALPDRAKR (89 aa)) is cleaved from the precursor. An intrachain disulfide couples cysteine 115 to cysteine 131.

It belongs to the natriuretic peptide family. Highly expressed in brain and liver, and moderately in gut, gills and heart. Expressed to a low level in atrium, ventricle and liver of fresh water eels.

Its subcellular location is the secreted. In terms of biological role, hormone which plays a role in endochondral ossification through regulation of cartilaginous growth plate chondrocytes proliferation and differentiation. May also be vasoactive and natriuretic. May be important for freshwater adaptation. This is C-type natriuretic peptide (cnp) from Anguilla japonica (Japanese eel).